The sequence spans 661 residues: Polyadenylate-binding protein, cytoplasmic and nuclear (661 aa).

Over residues 1-11 (MSAAETNQVQE) the composition is skewed to polar residues. Residues 1–61 (MSAAETNQVQ…SAEEQGESSG (61 aa)) are disordered. A compositionally biased stretch (low complexity) spans 20–51 (SSSSPAAGGATTATTTNNAESSDATSSSVPAD). RRM domains lie at 67-145 (ASLY…WSQR), 155-232 (GNIF…KHVS), 248-325 (TNIY…RAQK), and 351-428 (VNLF…LAQR). Residues 473-563 (FPPNGRGNAP…PNRPAGGNVP (91 aa)) form a disordered region. Over residues 501 to 511 (EQWPRPGPNGQ) the composition is skewed to pro residues. Residues 523–532 (QDFNGQNMRP) show a composition bias toward polar residues. Positions 533 to 549 (QQQQQQQQQQQQQQQQQ) are enriched in low complexity. Positions 563–644 (PAKDLAALIA…ALNAFEEYKN (82 aa)) constitute a PABC domain.

It belongs to the polyadenylate-binding protein type-1 family.

It is found in the cytoplasm. The protein resides in the nucleus. In terms of biological role, binds the poly(A) tail of mRNA. Appears to be an important mediator of the multiple roles of the poly(A) tail in mRNA biogenesis, stability and translation. In the nucleus, involved in both mRNA cleavage and polyadenylation. Is also required for efficient mRNA export to the cytoplasm. Acts in concert with a poly(A)-specific nuclease (PAN) to affect poly(A) tail shortening, which may occur concomitantly with either nucleocytoplasmic mRNA transport or translational initiation. In the cytoplasm, stimulates translation initiation and regulates mRNA decay through translation termination-coupled poly(A) shortening, probably mediated by PAN. This chain is Polyadenylate-binding protein, cytoplasmic and nuclear (PAB1), found in Lodderomyces elongisporus (strain ATCC 11503 / CBS 2605 / JCM 1781 / NBRC 1676 / NRRL YB-4239) (Yeast).